The primary structure comprises 550 residues: Tyrosine-protein phosphatase 1 (550 aa).

The Tyrosine-protein phosphatase domain maps to 260–539 (LYQKFLRLQS…KYVYDLIDSL (280 aa)). 2 positions are modified to phosphoserine: Ser-318 and Ser-320. Cys-470 serves as the catalytic Phosphocysteine intermediate.

It belongs to the protein-tyrosine phosphatase family. Non-receptor class subfamily.

The protein localises to the cytoplasm. It catalyses the reaction O-phospho-L-tyrosyl-[protein] + H2O = L-tyrosyl-[protein] + phosphate. In terms of biological role, plays a role in inhibiting the onset of mitosis. Dephosphorylates sty1/spc1 and wis1/spc2/sty2. This is Tyrosine-protein phosphatase 1 (pyp1) from Schizosaccharomyces pombe (strain 972 / ATCC 24843) (Fission yeast).